The primary structure comprises 458 residues: MNTSYSQSTLRHNQVLIWLCVLSFFSVLNEMVLNVSLPDIANEFNKLPASANWVNTAFMLTFSIGTALYGKLSDQLGIKNLLLFGIMVNGLGSIIGFVGHSFFPILILARFIQGIGAAAFPALVMVVVARYIPKENRGKAFGLIGSLVAMGEGVGPAIGGMVAHYIHWSYLLLIPTATIITVPFLIKLLKKEERIRGHIDMAGIILMSAGIVFFMLFTTSYRFSFLIISILAFFIFVQHIRKAQDPFVDPELGKNVFFVIGTLCGGLIFGTVAGFVSMVPYMMKDVHHLSTAAIGSGIIFPGTMSVIIFGYIGGLLVDRKGSLYVLTIGSALLSSGFLIAAFFIDAAPWIMTIIVIFVFGGLSFTKTVISTVVSSSLKEKEAGAGMSLLNFTSFLSEGTGIAIVGGLLSIGFLDHRLLPIDVDHSTYLYSNMLILFAGIIVICWLVILNVYKRSRRHG.

A run of 12 helical transmembrane segments spans residues 12–33 (HNQV…EMVL), 81–100 (LLLF…FVGH), 111–129 (FIQG…VVVA), 140–162 (AFGL…GGMV), 165–185 (YIHW…VPFL), 201–221 (MAGI…TTSY), 223–240 (FSFL…VQHI), 256–276 (VFFV…AGFV), 297–317 (GIIF…GLLV), 324–344 (YVLT…AFFI), 346–365 (AAPW…LSFT), and 432–451 (MLIL…LNVY).

The protein belongs to the major facilitator superfamily. TCR/Tet family.

It localises to the cell membrane. Its function is as follows. Resistance to tetracycline by an active tetracycline efflux. This is an energy-dependent process that decreases the accumulation of the antibiotic in whole cells. This protein functions as a metal-tetracycline/H(+) antiporter. This chain is Tetracycline resistance protein (tetB), found in Bacillus subtilis (strain 168).